The primary structure comprises 366 residues: Spermidine/putrescine import ATP-binding protein PotA (366 aa).

Residues 8–239 (IRFENVTKQF…PINKFVADFI (232 aa)) form the ABC transporter domain. 41 to 48 (GPSGCGKT) is an ATP binding site.

This sequence belongs to the ABC transporter superfamily. Spermidine/putrescine importer (TC 3.A.1.11.1) family. In terms of assembly, the complex is composed of two ATP-binding proteins (PotA), two transmembrane proteins (PotB and PotC) and a solute-binding protein (PotD).

It is found in the cell membrane. It carries out the reaction ATP + H2O + polyamine-[polyamine-binding protein]Side 1 = ADP + phosphate + polyamineSide 2 + [polyamine-binding protein]Side 1.. Its function is as follows. Part of the ABC transporter complex PotABCD involved in spermidine/putrescine import. Responsible for energy coupling to the transport system. This chain is Spermidine/putrescine import ATP-binding protein PotA, found in Listeria monocytogenes serotype 4b (strain F2365).